Here is a 219-residue protein sequence, read N- to C-terminus: Guanylate kinase (219 aa).

Positions 15 to 194 (GLMFVLSSPS…AFAEVQSILK (180 aa)) constitute a Guanylate kinase-like domain. 22–29 (SPSGAGKT) is a binding site for ATP.

Belongs to the guanylate kinase family.

Its subcellular location is the cytoplasm. The enzyme catalyses GMP + ATP = GDP + ADP. Its function is as follows. Essential for recycling GMP and indirectly, cGMP. The chain is Guanylate kinase from Bradyrhizobium diazoefficiens (strain JCM 10833 / BCRC 13528 / IAM 13628 / NBRC 14792 / USDA 110).